A 152-amino-acid polypeptide reads, in one-letter code: Deoxyuridine 5'-triphosphate nucleotidohydrolase (152 aa).

Residues 71 to 73, N84, 88 to 90, and M98 each bind substrate; these read RSG and LID.

Belongs to the dUTPase family. Mg(2+) serves as cofactor.

The catalysed reaction is dUTP + H2O = dUMP + diphosphate + H(+). It functions in the pathway pyrimidine metabolism; dUMP biosynthesis; dUMP from dCTP (dUTP route): step 2/2. In terms of biological role, this enzyme is involved in nucleotide metabolism: it produces dUMP, the immediate precursor of thymidine nucleotides and it decreases the intracellular concentration of dUTP so that uracil cannot be incorporated into DNA. This is Deoxyuridine 5'-triphosphate nucleotidohydrolase from Pectobacterium carotovorum subsp. carotovorum (strain PC1).